Here is a 284-residue protein sequence, read N- to C-terminus: Bifunctional protein FolD (284 aa).

NADP(+)-binding positions include 166–168 (GAS) and Ile232.

The protein belongs to the tetrahydrofolate dehydrogenase/cyclohydrolase family. In terms of assembly, homodimer.

The enzyme catalyses (6R)-5,10-methylene-5,6,7,8-tetrahydrofolate + NADP(+) = (6R)-5,10-methenyltetrahydrofolate + NADPH. The catalysed reaction is (6R)-5,10-methenyltetrahydrofolate + H2O = (6R)-10-formyltetrahydrofolate + H(+). Its pathway is one-carbon metabolism; tetrahydrofolate interconversion. Functionally, catalyzes the oxidation of 5,10-methylenetetrahydrofolate to 5,10-methenyltetrahydrofolate and then the hydrolysis of 5,10-methenyltetrahydrofolate to 10-formyltetrahydrofolate. This is Bifunctional protein FolD from Shewanella baltica (strain OS195).